The following is a 252-amino-acid chain: Imidazole glycerol phosphate synthase subunit HisF (252 aa).

Active-site residues include Asp13 and Asp132.

It belongs to the HisA/HisF family. As to quaternary structure, heterodimer of HisH and HisF.

The protein resides in the cytoplasm. The catalysed reaction is 5-[(5-phospho-1-deoxy-D-ribulos-1-ylimino)methylamino]-1-(5-phospho-beta-D-ribosyl)imidazole-4-carboxamide + L-glutamine = D-erythro-1-(imidazol-4-yl)glycerol 3-phosphate + 5-amino-1-(5-phospho-beta-D-ribosyl)imidazole-4-carboxamide + L-glutamate + H(+). The protein operates within amino-acid biosynthesis; L-histidine biosynthesis; L-histidine from 5-phospho-alpha-D-ribose 1-diphosphate: step 5/9. Functionally, IGPS catalyzes the conversion of PRFAR and glutamine to IGP, AICAR and glutamate. The HisF subunit catalyzes the cyclization activity that produces IGP and AICAR from PRFAR using the ammonia provided by the HisH subunit. This Campylobacter hominis (strain ATCC BAA-381 / DSM 21671 / CCUG 45161 / LMG 19568 / NCTC 13146 / CH001A) protein is Imidazole glycerol phosphate synthase subunit HisF.